Consider the following 175-residue polypeptide: UPF0398 protein SPH_0478 (175 aa).

It belongs to the UPF0398 family.

This chain is UPF0398 protein SPH_0478, found in Streptococcus pneumoniae (strain Hungary19A-6).